The chain runs to 144 residues: Deoxyuridine 5'-triphosphate nucleotidohydrolase (144 aa).

Residues 63–65, asparagine 76, and 80–82 each bind substrate; these read RSG and TID.

The protein belongs to the dUTPase family. It depends on Mg(2+) as a cofactor.

The enzyme catalyses dUTP + H2O = dUMP + diphosphate + H(+). It participates in pyrimidine metabolism; dUMP biosynthesis; dUMP from dCTP (dUTP route): step 2/2. In terms of biological role, this enzyme is involved in nucleotide metabolism: it produces dUMP, the immediate precursor of thymidine nucleotides and it decreases the intracellular concentration of dUTP so that uracil cannot be incorporated into DNA. The chain is Deoxyuridine 5'-triphosphate nucleotidohydrolase from Bacteroides thetaiotaomicron (strain ATCC 29148 / DSM 2079 / JCM 5827 / CCUG 10774 / NCTC 10582 / VPI-5482 / E50).